A 253-amino-acid chain; its full sequence is Probable transcriptional regulatory protein Tlet_1011 (253 aa).

This sequence belongs to the TACO1 family.

It is found in the cytoplasm. The chain is Probable transcriptional regulatory protein Tlet_1011 from Pseudothermotoga lettingae (strain ATCC BAA-301 / DSM 14385 / NBRC 107922 / TMO) (Thermotoga lettingae).